The following is a 547-amino-acid chain: Glucose-6-phosphate isomerase (547 aa).

Glu-351 serves as the catalytic Proton donor. Catalysis depends on residues His-382 and Lys-510.

This sequence belongs to the GPI family.

The protein localises to the cytoplasm. It carries out the reaction alpha-D-glucose 6-phosphate = beta-D-fructose 6-phosphate. The protein operates within carbohydrate biosynthesis; gluconeogenesis. It participates in carbohydrate degradation; glycolysis; D-glyceraldehyde 3-phosphate and glycerone phosphate from D-glucose: step 2/4. Its function is as follows. Catalyzes the reversible isomerization of glucose-6-phosphate to fructose-6-phosphate. This is Glucose-6-phosphate isomerase from Saccharophagus degradans (strain 2-40 / ATCC 43961 / DSM 17024).